We begin with the raw amino-acid sequence, 190 residues long: Elongation factor P-like protein (190 aa).

Belongs to the elongation factor P family.

The sequence is that of Elongation factor P-like protein from Proteus mirabilis (strain HI4320).